Reading from the N-terminus, the 52-residue chain is UPF0391 membrane protein XOO4217 (52 aa).

A run of 2 helical transmembrane segments spans residues alanine 5–glycine 25 and alanine 27–phenylalanine 47.

It belongs to the UPF0391 family.

The protein localises to the cell membrane. The protein is UPF0391 membrane protein XOO4217 of Xanthomonas oryzae pv. oryzae (strain KACC10331 / KXO85).